A 315-amino-acid chain; its full sequence is Ribosomal RNA small subunit methyltransferase H (315 aa).

S-adenosyl-L-methionine is bound by residues 35–37 (GGH), aspartate 55, phenylalanine 79, aspartate 101, and glutamine 108.

The protein belongs to the methyltransferase superfamily. RsmH family.

The protein localises to the cytoplasm. It catalyses the reaction cytidine(1402) in 16S rRNA + S-adenosyl-L-methionine = N(4)-methylcytidine(1402) in 16S rRNA + S-adenosyl-L-homocysteine + H(+). In terms of biological role, specifically methylates the N4 position of cytidine in position 1402 (C1402) of 16S rRNA. The chain is Ribosomal RNA small subunit methyltransferase H from Photobacterium profundum (strain SS9).